A 741-amino-acid chain; its full sequence is Methionine--tRNA ligase (741 aa).

Residues 1–22 (MTMKQYTMSKMNAETQTQTRES) are compositionally biased toward polar residues. Positions 1–25 (MTMKQYTMSKMNAETQTQTRESFPT) are disordered. Positions 36–46 (PYANGDLHIGH) match the 'HIGH' region motif. The Zn(2+) site is built by C167, C170, C179, and C183. The interval 309 to 329 (VRSHSSSSAKDSSEGNSPSNI) is disordered. The segment covering 311–329 (SHSSSSAKDSSEGNSPSNI) has biased composition (low complexity). An ATP-binding site is contributed by T381. Residues 591 to 629 (KLADRVTDPTDDDDSDTDTETGTDVAETTNESHSESNMT) are disordered. Over residues 599-611 (PTDDDDSDTDTET) the composition is skewed to acidic residues. Polar residues predominate over residues 616 to 629 (AETTNESHSESNMT). Residues 643-741 (EFEELDLRVA…EDADPGTSIQ (99 aa)) enclose the tRNA-binding domain.

Belongs to the class-I aminoacyl-tRNA synthetase family. MetG type 1 subfamily. As to quaternary structure, homodimer. It depends on Zn(2+) as a cofactor.

Its subcellular location is the cytoplasm. It catalyses the reaction tRNA(Met) + L-methionine + ATP = L-methionyl-tRNA(Met) + AMP + diphosphate. Is required not only for elongation of protein synthesis but also for the initiation of all mRNA translation through initiator tRNA(fMet) aminoacylation. This Haloquadratum walsbyi (strain DSM 16790 / HBSQ001) protein is Methionine--tRNA ligase.